A 447-amino-acid chain; its full sequence is Methylenetetrahydrofolate--tRNA-(uracil-5-)-methyltransferase TrmFO (447 aa).

Residue 10-15 coordinates FAD; sequence GAGLAG.

Belongs to the MnmG family. TrmFO subfamily. FAD is required as a cofactor.

It is found in the cytoplasm. It catalyses the reaction uridine(54) in tRNA + (6R)-5,10-methylene-5,6,7,8-tetrahydrofolate + NADH + H(+) = 5-methyluridine(54) in tRNA + (6S)-5,6,7,8-tetrahydrofolate + NAD(+). The catalysed reaction is uridine(54) in tRNA + (6R)-5,10-methylene-5,6,7,8-tetrahydrofolate + NADPH + H(+) = 5-methyluridine(54) in tRNA + (6S)-5,6,7,8-tetrahydrofolate + NADP(+). Catalyzes the folate-dependent formation of 5-methyl-uridine at position 54 (M-5-U54) in all tRNAs. The sequence is that of Methylenetetrahydrofolate--tRNA-(uracil-5-)-methyltransferase TrmFO from Lactococcus lactis subsp. lactis (strain IL1403) (Streptococcus lactis).